A 478-amino-acid polypeptide reads, in one-letter code: NADH-quinone oxidoreductase subunit N 1 (478 aa).

14 consecutive transmembrane segments (helical) span residues 6–26, 33–53, 71–91, 99–119, 121–141, 156–176, 193–212, 244–264, 265–285, 299–319, 321–341, 364–384, 388–408, and 438–458; these read TVLP…SGVF, FAIT…LVAA, FADV…VTFN, FEFP…VSAS, LITL…LAAF, FVLG…VYGF, PTAA…GLAF, IAVF…VLGQ, WRDL…IGAI, IGHM…GVSG, LIYL…IIAM, FAFV…LAGF, FYVF…LGII, and AGVS…VFHP.

This sequence belongs to the complex I subunit 2 family. As to quaternary structure, NDH-1 is composed of 14 different subunits. Subunits NuoA, H, J, K, L, M, N constitute the membrane sector of the complex.

It is found in the cell inner membrane. It catalyses the reaction a quinone + NADH + 5 H(+)(in) = a quinol + NAD(+) + 4 H(+)(out). In terms of biological role, NDH-1 shuttles electrons from NADH, via FMN and iron-sulfur (Fe-S) centers, to quinones in the respiratory chain. The immediate electron acceptor for the enzyme in this species is believed to be ubiquinone. Couples the redox reaction to proton translocation (for every two electrons transferred, four hydrogen ions are translocated across the cytoplasmic membrane), and thus conserves the redox energy in a proton gradient. The protein is NADH-quinone oxidoreductase subunit N 1 of Acidiphilium cryptum (strain JF-5).